A 443-amino-acid polypeptide reads, in one-letter code: Threonine/serine transporter TdcC (443 aa).

11 helical membrane-spanning segments follow: residues 22-42 (TTWTLGLFGTAIGAGVLFFPI), 44-64 (AGFGGLIPILLMLVLAYPIAF), 97-117 (GVVITFLYFFAICPLLWIYGV), 140-160 (FVALFLLLLMAFVIWFGKDLM), 163-183 (VMSYLVWPFIASLVLISLSLI), 207-227 (ILITVWLGISIMVFSFNFSPI), 261-281 (MLMVAVVMFFAFSCLFTLSPA), 311-331 (FAITLEYAASIIALVAIFKSF), 366-386 (ISMIFIMGSTWVVAYANPNIL), 389-409 (IEAMGAPIIASLLCLLPMYAI), and 423-443 (DNVFVTVIGLLTILNIVYKLF).

It belongs to the amino acid/polyamine transporter 2 family. SdaC/TdcC subfamily.

It localises to the cell inner membrane. The catalysed reaction is L-threonine(in) + H(+)(in) = L-threonine(out) + H(+)(out). It carries out the reaction L-serine(in) + H(+)(in) = L-serine(out) + H(+)(out). Involved in the import of threonine and serine into the cell, with the concomitant import of a proton (symport system). The sequence is that of Threonine/serine transporter TdcC from Shigella sonnei (strain Ss046).